Here is a 551-residue protein sequence, read N- to C-terminus: MFS efflux transporter aclA (551 aa).

The next 8 helical transmembrane spans lie at 26-46 (WAVF…ITAI), 64-84 (VWIA…IGQI), 93-113 (PMII…GATS), 125-145 (GLGA…LVPL), 154-174 (IALS…GALV), 181-201 (WVFY…VLCL), 220-240 (WVGN…LVIG), and 251-271 (VLVP…FEAS). The N-linked (GlcNAc...) asparagine glycan is linked to Asn286. 6 helical membrane-spanning segments follow: residues 294 to 314 (VLAF…TLFF), 327 to 347 (VDVI…GAIM), 356 to 376 (LHWA…TWDA), 385 to 405 (ILQC…LPAI), 420 to 440 (AYAF…AVVF), and 492 to 512 (LRTV…LVVV).

It belongs to the major facilitator superfamily.

Its subcellular location is the membrane. Its function is as follows. MFS efflux transporter; part of the gene cluster that mediates the biosynthesis of aspirochlorine (or antibiotic A30641), an unusual halogenated spiro compound with distinctive antifungal properties due to selective inhibition of protein biosynthesis, and which is also active against bacteria, viruses, and murine tumor cells. This Aspergillus oryzae (strain ATCC 42149 / RIB 40) (Yellow koji mold) protein is MFS efflux transporter aclA.